The following is a 1076-amino-acid chain: Guanylyl cyclase C (1076 aa).

The signal sequence occupies residues 1–23 (MKSPLLGLVVWSLLLQLLQPGLA). Residues 24–433 (FWNSQISQNC…PHDIPGLGPH (410 aa)) lie on the Extracellular side of the membrane. Residues N35, N82, N191, N198, N287, N306, N310, N348, and N405 are each glycosylated (N-linked (GlcNAc...) asparagine). Residues 434–457 (ILLIAVCTLAGVVVLILLIALLVL) form a helical membrane-spanning segment. Topologically, residues 458–1076 (RKYKKDNELR…NTTDQDSTYF (619 aa)) are cytoplasmic. The Protein kinase domain occupies 492–752 (LKIDDDKKRD…KIENTLAKIF (261 aa)). The 131-residue stretch at 827–957 (TVYFSDIVGF…DTVNTASRME (131 aa)) folds into the Guanylate cyclase domain.

Belongs to the adenylyl cyclase class-4/guanylyl cyclase family. Homotrimer. Interacts via its C-terminal region with NHERF4. Interacts with the lectin chaperone VIP36. Post-translationally, glycosylation at Asn-62 is required for interaction with VIP36 while glycosylation at Asn-348 and Asn-405 modulates ligand-mediated GC-C activation.

The protein localises to the cell membrane. It is found in the endoplasmic reticulum membrane. The enzyme catalyses GTP = 3',5'-cyclic GMP + diphosphate. Functionally, guanylyl cyclase that catalyzes synthesis of cyclic GMP (cGMP) from GTP. The polypeptide is Guanylyl cyclase C (GUCY2C) (Cavia porcellus (Guinea pig)).